The sequence spans 295 residues: Fructose-bisphosphate aldolase class 1 (295 aa).

Residue E176 is the Proton acceptor of the active site. K213 (schiff-base intermediate with dihydroxyacetone-P) is an active-site residue.

Belongs to the class I fructose-bisphosphate aldolase family.

It carries out the reaction beta-D-fructose 1,6-bisphosphate = D-glyceraldehyde 3-phosphate + dihydroxyacetone phosphate. Its pathway is carbohydrate degradation; glycolysis; D-glyceraldehyde 3-phosphate and glycerone phosphate from D-glucose: step 4/4. The protein is Fructose-bisphosphate aldolase class 1 of Fusobacterium nucleatum subsp. nucleatum (strain ATCC 25586 / DSM 15643 / BCRC 10681 / CIP 101130 / JCM 8532 / KCTC 2640 / LMG 13131 / VPI 4355).